The chain runs to 327 residues: Phenylalanine--tRNA ligase alpha subunit (327 aa).

Residue Glu252 coordinates Mg(2+).

This sequence belongs to the class-II aminoacyl-tRNA synthetase family. Phe-tRNA synthetase alpha subunit type 1 subfamily. Tetramer of two alpha and two beta subunits. The cofactor is Mg(2+).

It is found in the cytoplasm. It carries out the reaction tRNA(Phe) + L-phenylalanine + ATP = L-phenylalanyl-tRNA(Phe) + AMP + diphosphate + H(+). The sequence is that of Phenylalanine--tRNA ligase alpha subunit from Sodalis glossinidius (strain morsitans).